A 106-amino-acid chain; its full sequence is Nucleoid-associated protein Abu_0429 (106 aa).

It belongs to the YbaB/EbfC family. Homodimer.

Its subcellular location is the cytoplasm. It localises to the nucleoid. Binds to DNA and alters its conformation. May be involved in regulation of gene expression, nucleoid organization and DNA protection. This Aliarcobacter butzleri (strain RM4018) (Arcobacter butzleri) protein is Nucleoid-associated protein Abu_0429.